A 440-amino-acid chain; its full sequence is tRNA(Ile)-lysidine synthase (440 aa).

28–33 lines the ATP pocket; sequence SGGMDS.

The protein belongs to the tRNA(Ile)-lysidine synthase family.

Its subcellular location is the cytoplasm. It catalyses the reaction cytidine(34) in tRNA(Ile2) + L-lysine + ATP = lysidine(34) in tRNA(Ile2) + AMP + diphosphate + H(+). Ligates lysine onto the cytidine present at position 34 of the AUA codon-specific tRNA(Ile) that contains the anticodon CAU, in an ATP-dependent manner. Cytidine is converted to lysidine, thus changing the amino acid specificity of the tRNA from methionine to isoleucine. This is tRNA(Ile)-lysidine synthase from Xanthomonas axonopodis pv. citri (strain 306).